The primary structure comprises 150 residues: UPF0506 protein SJCHGC03047 (150 aa).

The N-terminal stretch at 1 to 18 (MNTCIQLLILCLVTLTNS) is a signal peptide. Residues Asn20, Asn48, and Asn110 are each glycosylated (N-linked (GlcNAc...) asparagine). Disulfide bonds link Cys116–Cys130, Cys123–Cys134, and Cys129–Cys139.

It belongs to the UPF0506 family.

It is found in the secreted. The chain is UPF0506 protein SJCHGC03047 from Schistosoma japonicum (Blood fluke).